Consider the following 604-residue polypeptide: MLARALLLCAAVALSGAANPCCSHPCQNRGVCMSVGFDQYKCDCTRTGFYGENCTTPEFLTRIKLLLKPTPNTVHYILTHFKGVWNIVNKISFLRNMIMRYVLTSRSHLIESPPTYNVHYSYKSWEAFSNLSYYTRALPPVPDDCPTPMGVKGRKELPDSKEVVKKVLLRRKFIPDPQGTNLMFAFFAQHFTHQFFKTDFERGPAFTKGKNHGVDLSHIYGESLERQHKLRLFKDGKMKYQMINGEMYPPTVKDTQVEMIYPPHVPEHLKFAVGQEVFGLVPGLMMYATIWLREHNRVCDVLKQEHPEWGDEQLFQTSRLILIGETIKIVIEDYVQHLSGYHFKLKFDPELLFNQQFQYQNRIAAEFNTLYHWHPLLPDVFQIDGQEYNYQQFIYNNSVLLEHGLTQFVESFTRQRAGRVAGGRNLPVAVEKVSKASIDQSREMKYQSFNEYRKRFLVKPYESFEELTGEKEMAAELEALYGDIDAMEFYPALLVEKPRPDAIFGETMVEAGAPFSLKGLMGNPICSPEYWKPSTFGGEVGFKIINTASIQSLICSNVKGCPFTSFSVQDTHLTKTVTINASSSHSGLDDINPTVLLKERSTEL.

A signal peptide spans 1-17; it reads MLARALLLCAAVALSGA. The EGF-like domain occupies 18-55; that stretch reads ANPCCSHPCQNRGVCMSVGFDQYKCDCTRTGFYGENCT. Cystine bridges form between Cys-21/Cys-32, Cys-22/Cys-145, Cys-26/Cys-42, and Cys-44/Cys-54. Asn-53 carries an N-linked (GlcNAc...) asparagine glycan. Substrate is bound at residue Arg-106. N-linked (GlcNAc...) asparagine glycosylation is present at Asn-130. The active-site Proton acceptor is the His-193. A substrate-binding site is contributed by Tyr-341. The active-site For cyclooxygenase activity is Tyr-371. Residue His-374 coordinates heme b. Asn-396 is a glycosylation site (N-linked (GlcNAc...) asparagine). Cys-526 is modified (S-nitrosocysteine). A disulfide bond links Cys-555 and Cys-561. At Ser-565 the chain carries O-acetylserine. Asn-580 carries N-linked (GlcNAc...) asparagine glycosylation.

The protein belongs to the prostaglandin G/H synthase family. As to quaternary structure, homodimer. Heme b is required as a cofactor. Post-translationally, S-nitrosylation by NOS2 (iNOS) activates enzyme activity. S-nitrosylation may take place on different Cys residues in addition to Cys-526. Acetylated at Ser-565 by SPHK1. During neuroinflammation, acetylation by SPHK1 promotes neuronal secretion of specialized preresolving mediators (SPMs), especially 15-R-lipoxin A4, which results in an increase of phagocytic microglia.

The protein resides in the microsome membrane. It is found in the endoplasmic reticulum membrane. It localises to the nucleus inner membrane. The protein localises to the nucleus outer membrane. It catalyses the reaction (5Z,8Z,11Z,14Z)-eicosatetraenoate + AH2 + 2 O2 = prostaglandin H2 + A + H2O. The enzyme catalyses (5Z,8Z,11Z,14Z)-eicosatetraenoate + 2 O2 = prostaglandin G2. It carries out the reaction prostaglandin G2 + AH2 = prostaglandin H2 + A + H2O. The catalysed reaction is (5Z,8Z,11Z,14Z,17Z)-eicosapentaenoate + 2 O2 = prostaglandin G3. It catalyses the reaction prostaglandin G3 + AH2 = prostaglandin H3 + A + H2O. The enzyme catalyses (8Z,11Z,14Z)-eicosatrienoate + 2 O2 = prostaglandin G1. It carries out the reaction prostaglandin G1 + AH2 = prostaglandin H1 + A + H2O. The catalysed reaction is 2-(5Z,8Z,11Z,14Z)-eicosatetraenoyl-sn-glycero-3-phosphoethanolamine + 2 O2 = 2-(prostaglandin G2)-sn-glycero-3-phosphoethanolamine. It catalyses the reaction 2-(prostaglandin G2)-sn-glycero-3-phosphoethanolamine + AH2 = 2-(prostaglandin H2)-sn-glycero-3-phosphoethanolamine + A + H2O. The enzyme catalyses 2-(5Z,8Z,11Z,14Z)-eicosatetraenoyl-sn-glycero-3-phosphocholine + 2 O2 = 2-(prostaglandin G2)-sn-glycero-3-phosphocholine. It carries out the reaction 2-(prostaglandin G2)-sn-glycero-3-phosphocholine + AH2 = 2-(prostaglandin H2)-sn-glycero-3-phosphocholine + A + H2O. The catalysed reaction is (15S)-hydroperoxy-(5Z,8Z,11Z,13E)-eicosatetraenoate + AH2 = (15S)-hydroxy-(5Z,8Z,11Z,13E)-eicosatetraenoate + A + H2O. It catalyses the reaction 2-(5Z,8Z,11Z,14Z)-eicosatetraenoyl-sn-glycero-3-phosphocholine + AH2 + O2 = 2-[(15S)-hydroxy-(5Z,8Z,11Z,13E)-eicosatetraenoyl]-sn-glycero-3-phosphocholine + A + H2O. The enzyme catalyses 2-(5Z,8Z,11Z,14Z)-eicosatetraenoyl-sn-glycero-3-phosphocholine + AH2 + O2 = 2-[(15R)-hydroxy-(5Z,8Z,11Z,13E)-eicosatetraenoyl]-sn-glycero-3-phosphocholine + A + H2O. It carries out the reaction 2-(5Z,8Z,11Z,14Z)-eicosatetraenoyl-sn-glycero-3-phosphocholine + AH2 + O2 = 2-[(11R)-hydroxy-(5Z,8Z,12E,14Z)-eicosatetraenoyl]-sn-glycero-3-phosphocholine + A + H2O. The catalysed reaction is (9Z,12Z)-octadecadienoate + AH2 + O2 = 9-hydroxy-(10E,12Z)-octadecadienoate + A + H2O. It catalyses the reaction (9Z,12Z)-octadecadienoate + AH2 + O2 = 13-hydroxy-(9Z,11E)-octadecadienoate + A + H2O. The enzyme catalyses (5Z,8Z,11Z,14Z)-eicosatetraenoate + AH2 + O2 = (15R)-hydroxy-(5Z,8Z,11Z,13E)-eicosatetraenoate + A + H2O. It carries out the reaction (5Z,8Z,11Z,14Z)-eicosatetraenoate + AH2 + O2 = (11R)-hydroxy-(5Z,8Z,12E,14Z)-eicosatetraenoate + A + H2O. The catalysed reaction is (5Z,8Z,11Z,14Z,17Z)-eicosapentaenoate + AH2 + O2 = (11R)-hydroxy-(5Z,8Z,12E,14Z,17Z)-eicosapentaenoate + A + H2O. It catalyses the reaction (5Z,8Z,11Z,14Z,17Z)-eicosapentaenoate + AH2 + O2 = (18S)-hydroxy-(5Z,8Z,11Z,14Z,16E)-eicosapentaenoate + A + H2O. The enzyme catalyses (5Z,8Z,11Z,14Z,17Z)-eicosapentaenoate + AH2 + O2 = (18R)-hydroxy-(5Z,8Z,11Z,14Z,16E)-eicosapentaenoate + A + H2O. It carries out the reaction (5Z,8Z,11Z,14Z,17Z)-eicosapentaenoate + AH2 + O2 = (15R)-hydroxy-(5Z,8Z,11Z,13E,17Z)-eicosapentaenoate + A + H2O. The catalysed reaction is (5Z,8Z,11Z,14Z,17Z)-eicosapentaenoate + AH2 + O2 = (15S)-hydroxy-(5Z,8Z,11Z,13E,17Z)-eicosapentaenoate + A + H2O. It catalyses the reaction (7Z,10Z,13Z,16Z,19Z)-docosapentaenoate + AH2 + O2 = 13R-hydroxy-(7Z,10Z,14E,16Z,19Z)-docosapentaenoate + A + H2O. The enzyme catalyses (4Z,7Z,10Z,13Z,16Z,19Z)-docosahexaenoate + AH2 + O2 = 13-hydroxy-(4Z,7Z,10Z,14E,16Z,19Z)-docosahexaenoate + A + H2O. It carries out the reaction (5S)-hydroxy-(6E,8Z,11Z,14Z)-eicosatetraenoate + AH2 + O2 = (5S,15R)-dihydroxy-(6E,8Z,11Z,13E)-eicosatetraenoate + A + H2O. The catalysed reaction is (4Z,7Z,10Z,13Z,16Z,19Z)-docosahexaenoate + AH2 + O2 = 17R-hydroxy-(4Z,7Z,10Z,13Z,15E,19Z)-docosahexaenoate + A + H2O. It catalyses the reaction (5S)-hydroxy-(6E,8Z,11Z,14Z)-eicosatetraenoate + AH2 + O2 = (5S,15S)-dihydroxy-(6E,8Z,11Z,13E)-eicosatetraenoate + A + H2O. The enzyme catalyses (5S)-hydroxy-(6E,8Z,11Z,14Z)-eicosatetraenoate + AH2 + O2 = (5S,11R)-dihydroxy-(6E,8Z,12E,14Z)-eicosatetraenoate + A + H2O. It carries out the reaction 2-(5Z,8Z,11Z,14Z-eicosatetraenoyl)-glycerol + 2 O2 = 2-glyceryl-prostaglandin G2. The catalysed reaction is 2-glyceryl-prostaglandin G2 + AH2 = 2-glyceryl-prostaglandin H2 + A + H2O. It catalyses the reaction (5Z,8Z,11Z,14Z)-eicosatetraenoate + O2 = (15R)-hydroperoxy-(5Z,8Z,11Z,13E)-eicosatetraenoate. The enzyme catalyses (5Z,8Z,11Z,14Z)-eicosatetraenoate + O2 = 11R-hydroperoxy-(5Z,8Z,12E,14Z)-eicosatetraenoate. It carries out the reaction (9Z,12Z)-octadecadienoate + AH2 + O2 = (9R)-hydroxy-(10E,12Z)-octadecadienoate + A + H2O. The catalysed reaction is (9Z,12Z)-octadecadienoate + AH2 + O2 = (9S)-hydroxy-(10E,12Z)-octadecadienoate + A + H2O. It catalyses the reaction (9Z,12Z)-octadecadienoate + AH2 + O2 = (13S)-hydroxy-(9Z,11E)-octadecadienoate + A + H2O. The enzyme catalyses (9Z,12Z)-octadecadienoate + AH2 + O2 = (13R)-hydroxy-(9Z,11E)-octadecadienoate + A + H2O. Its pathway is lipid metabolism; prostaglandin biosynthesis. Functionally, dual cyclooxygenase and peroxidase in the biosynthesis pathway of prostanoids, a class of C20 oxylipins mainly derived from arachidonate ((5Z,8Z,11Z,14Z)-eicosatetraenoate, AA, C20:4(n-6)), with a particular role in the inflammatory response. The cyclooxygenase activity oxygenates AA to the hydroperoxy endoperoxide prostaglandin G2 (PGG2), and the peroxidase activity reduces PGG2 to the hydroxy endoperoxide prostaglandin H2 (PGH2), the precursor of all 2-series prostaglandins and thromboxanes. This complex transformation is initiated by abstraction of hydrogen at carbon 13 (with S-stereochemistry), followed by insertion of molecular O2 to form the endoperoxide bridge between carbon 9 and 11 that defines prostaglandins. The insertion of a second molecule of O2 (bis-oxygenase activity) yields a hydroperoxy group in PGG2 that is then reduced to PGH2 by two electrons. Similarly catalyzes successive cyclooxygenation and peroxidation of dihomo-gamma-linoleate (DGLA, C20:3(n-6)) and eicosapentaenoate (EPA, C20:5(n-3)) to corresponding PGH1 and PGH3, the precursors of 1- and 3-series prostaglandins. In an alternative pathway of prostanoid biosynthesis, converts 2-arachidonoyl lysophopholipids to prostanoid lysophopholipids, which are then hydrolyzed by intracellular phospholipases to release free prostanoids. Metabolizes 2-arachidonoyl glycerol yielding the glyceryl ester of PGH2, a process that can contribute to pain response. Generates lipid mediators from n-3 and n-6 polyunsaturated fatty acids (PUFAs) via a lipoxygenase-type mechanism. Oxygenates PUFAs to hydroperoxy compounds and then reduces them to corresponding alcohols. Plays a role in the generation of resolution phase interaction products (resolvins) during both sterile and infectious inflammation. Metabolizes docosahexaenoate (DHA, C22:6(n-3)) to 17R-HDHA, a precursor of the D-series resolvins (RvDs). As a component of the biosynthetic pathway of E-series resolvins (RvEs), converts eicosapentaenoate (EPA, C20:5(n-3)) primarily to 18S-HEPE that is further metabolized by ALOX5 and LTA4H to generate 18S-RvE1 and 18S-RvE2. In vascular endothelial cells, converts docosapentaenoate (DPA, C22:5(n-3)) to 13R-HDPA, a precursor for 13-series resolvins (RvTs) shown to activate macrophage phagocytosis during bacterial infection. In activated leukocytes, contributes to oxygenation of hydroxyeicosatetraenoates (HETE) to diHETES (5,15-diHETE and 5,11-diHETE). Can also use linoleate (LA, (9Z,12Z)-octadecadienoate, C18:2(n-6)) as substrate and produce hydroxyoctadecadienoates (HODEs) in a regio- and stereospecific manner, being (9R)-HODE ((9R)-hydroxy-(10E,12Z)-octadecadienoate) and (13S)-HODE ((13S)-hydroxy-(9Z,11E)-octadecadienoate) its major products. During neuroinflammation, plays a role in neuronal secretion of specialized preresolving mediators (SPMs) 15R-lipoxin A4 that regulates phagocytic microglia. The protein is Prostaglandin G/H synthase 2 (PTGS2) of Bos taurus (Bovine).